The chain runs to 71 residues: Small ribosomal subunit protein bS21 (71 aa).

The interval 37–71 is disordered; it reads HYEKPTAERKRKKAAAVKRHMKKLSRDNARRVKLY. Basic residues predominate over residues 45 to 59; sequence RKRKKAAAVKRHMKK. The segment covering 60–71 has biased composition (basic and acidic residues); that stretch reads LSRDNARRVKLY.

The protein belongs to the bacterial ribosomal protein bS21 family.

In Pseudoalteromonas translucida (strain TAC 125), this protein is Small ribosomal subunit protein bS21.